Reading from the N-terminus, the 153-residue chain is Transcription antitermination protein NusB (153 aa).

It belongs to the NusB family.

Involved in transcription antitermination. Required for transcription of ribosomal RNA (rRNA) genes. Binds specifically to the boxA antiterminator sequence of the ribosomal RNA (rrn) operons. This is Transcription antitermination protein NusB from Nitratidesulfovibrio vulgaris (strain ATCC 29579 / DSM 644 / CCUG 34227 / NCIMB 8303 / VKM B-1760 / Hildenborough) (Desulfovibrio vulgaris).